A 62-amino-acid chain; its full sequence is Defensin BmKDfsin4 (62 aa).

Residues 1–24 form the signal peptide; the sequence is MKTIVLLFVLALVFCTLEMGIVEA. Intrachain disulfides connect C28–C49, C35–C57, and C39–C59.

This sequence belongs to the invertebrate defensin family. Type 2 subfamily.

Its subcellular location is the secreted. Functionally, dual-function peptide with antimicrobial and potassium channel-blocking activities. Shows inhibitory activity against Gram-positive bacteria such as S.aureus, B.subtilis, and M.luteus as well as methicillin-resistant S.aureus (MIC=0.1-20 uM). Does not act on bacteria by disrupting membranes. Also moderately inhibits Kv1.1/KCNA1 (25.2% inhibition at 1 uM), Kv1.2/KCNA2 (30.5% inhibition at 1 uM), and Kv1.3/KCNA3 potassium channels (IC(50)=510.2 nM, 61% inhibition at 1 uM). Inhibits potassium channels by interacting with the pore region. Does not show hemolytic activity. In vitro, dose-dependently decreases the production of Hepatitis B virus (HBV) DNA and HBV viral proteins in both culture medium and cell lysate. In Olivierus martensii (Manchurian scorpion), this protein is Defensin BmKDfsin4.